The primary structure comprises 136 residues: Preprocaerulein type I' (136 aa).

The N-terminal stretch at 1–26 is a signal peptide; sequence MFKGILLCVLFAVLSANPLSQPEGFA. Residues 27-136 constitute a propeptide that is removed on maturation; it reads DEERDVRGLA…NALGGAPQQR (110 aa). The tract at residues 82–101 is disordered; it reads GAPQQREANDERRFADDEDD.

The protein belongs to the gastrin/cholecystokinin family. In terms of tissue distribution, expressed by the skin glands.

Its subcellular location is the secreted. The pharmacological activities of caerulein are quite similar to the physiological activities of gastrin and related peptides. The chain is Preprocaerulein type I' from Xenopus laevis (African clawed frog).